Consider the following 163-residue polypeptide: MVYESGFTTRRTYSSRPVTTSYAVTRTKRTPIDWEKVPFVPRPSLISDPVTAFGVRRPDLERRQRSILDPINRASIKPDYKLAYEPIEPYVSTRDKNRTRILGMVRQHIDTVEAGGNTAGRTFRDSLDAQLPRLHRAVSESLPVRRETYRNERSGAMVTKYSY.

This is an uncharacterized protein from Drosophila melanogaster (Fruit fly).